The chain runs to 209 residues: Thiamine-phosphate synthase 1 (209 aa).

4-amino-2-methyl-5-(diphosphooxymethyl)pyrimidine-binding positions include 39 to 43 and N74; that span reads QFREK. Residues D75 and D94 each coordinate Mg(2+). Residue S112 participates in 4-amino-2-methyl-5-(diphosphooxymethyl)pyrimidine binding. 138–140 is a 2-[(2R,5Z)-2-carboxy-4-methylthiazol-5(2H)-ylidene]ethyl phosphate binding site; sequence TQS. K141 is a binding site for 4-amino-2-methyl-5-(diphosphooxymethyl)pyrimidine. Residues G170 and 190-191 each bind 2-[(2R,5Z)-2-carboxy-4-methylthiazol-5(2H)-ylidene]ethyl phosphate; that span reads IS.

Belongs to the thiamine-phosphate synthase family. The cofactor is Mg(2+).

The catalysed reaction is 2-[(2R,5Z)-2-carboxy-4-methylthiazol-5(2H)-ylidene]ethyl phosphate + 4-amino-2-methyl-5-(diphosphooxymethyl)pyrimidine + 2 H(+) = thiamine phosphate + CO2 + diphosphate. It catalyses the reaction 2-(2-carboxy-4-methylthiazol-5-yl)ethyl phosphate + 4-amino-2-methyl-5-(diphosphooxymethyl)pyrimidine + 2 H(+) = thiamine phosphate + CO2 + diphosphate. It carries out the reaction 4-methyl-5-(2-phosphooxyethyl)-thiazole + 4-amino-2-methyl-5-(diphosphooxymethyl)pyrimidine + H(+) = thiamine phosphate + diphosphate. Its pathway is cofactor biosynthesis; thiamine diphosphate biosynthesis; thiamine phosphate from 4-amino-2-methyl-5-diphosphomethylpyrimidine and 4-methyl-5-(2-phosphoethyl)-thiazole: step 1/1. Functionally, condenses 4-methyl-5-(beta-hydroxyethyl)thiazole monophosphate (THZ-P) and 2-methyl-4-amino-5-hydroxymethyl pyrimidine pyrophosphate (HMP-PP) to form thiamine monophosphate (TMP). This chain is Thiamine-phosphate synthase 1, found in Streptococcus pneumoniae serotype 4 (strain ATCC BAA-334 / TIGR4).